The primary structure comprises 582 residues: ATP-dependent lipid A-core flippase (582 aa).

The next 5 helical transmembrane spans lie at 16–36 (LWPT…ALIL), 64–84 (LLWM…TSYI), 153–173 (IIGL…ILVV), 253–273 (PIIQ…ASFP), and 275–295 (VMDS…IALM). The region spanning 28-310 (IVAGIALILN…LTNVNAQFQR (283 aa)) is the ABC transmembrane type-1 domain. Positions 342-578 (LEFRNVTFTY…HGVYAQLHKM (237 aa)) constitute an ABC transporter domain. 376–383 (GRSGSGKS) provides a ligand contact to ATP.

Belongs to the ABC transporter superfamily. Lipid exporter (TC 3.A.1.106) family. In terms of assembly, homodimer.

The protein resides in the cell inner membrane. The enzyme catalyses ATP + H2O + lipid A-core oligosaccharideSide 1 = ADP + phosphate + lipid A-core oligosaccharideSide 2.. Involved in lipopolysaccharide (LPS) biosynthesis. Translocates lipid A-core from the inner to the outer leaflet of the inner membrane. Transmembrane domains (TMD) form a pore in the inner membrane and the ATP-binding domain (NBD) is responsible for energy generation. The sequence is that of ATP-dependent lipid A-core flippase from Salmonella choleraesuis (strain SC-B67).